The chain runs to 638 residues: Threonine--tRNA ligase (638 aa).

The TGS domain maps to 1–61; the sequence is MPVITLPDGS…SVDGKLQIIT (61 aa). The segment at 243-534 is catalytic; sequence DHRKIGKTQD…LTEEYAGFFP (292 aa). 3 residues coordinate Zn(2+): cysteine 334, histidine 385, and histidine 511.

Belongs to the class-II aminoacyl-tRNA synthetase family. Homodimer. Zn(2+) is required as a cofactor.

It is found in the cytoplasm. It catalyses the reaction tRNA(Thr) + L-threonine + ATP = L-threonyl-tRNA(Thr) + AMP + diphosphate + H(+). Its function is as follows. Catalyzes the attachment of threonine to tRNA(Thr) in a two-step reaction: L-threonine is first activated by ATP to form Thr-AMP and then transferred to the acceptor end of tRNA(Thr). Also edits incorrectly charged L-seryl-tRNA(Thr). This Hamiltonella defensa subsp. Acyrthosiphon pisum (strain 5AT) protein is Threonine--tRNA ligase.